Consider the following 174-residue polypeptide: Thioredoxin O, mitochondrial (174 aa).

The transit peptide at 1 to 59 (MALAHRLCRLPRLLPLAAAAAASKPYLPGKPSPAPPPPLSSPPPFPSLSRLFSTTPSSS) directs the protein to the mitochondrion. One can recognise a Thioredoxin domain in the interval 60–172 (GDSSMVVVGS…LESTMESLHK (113 aa)). Active-site nucleophile residues include C96 and C99. C96 and C99 are oxidised to a cystine.

The protein belongs to the thioredoxin family. Plant O-type subfamily.

The protein resides in the mitochondrion. Functionally, probable thiol-disulfide oxidoreductase that may participate in various redox reactions. This Oryza sativa subsp. japonica (Rice) protein is Thioredoxin O, mitochondrial.